The primary structure comprises 432 residues: Peptidase B (432 aa).

Lys-196 and Asp-201 together coordinate Mn(2+). Lys-208 is a catalytic residue. The Mn(2+) site is built by Asp-219, Asp-278, and Glu-280. Arg-282 is an active-site residue.

This sequence belongs to the peptidase M17 family. As to quaternary structure, homohexamer. Mn(2+) is required as a cofactor.

Its subcellular location is the cytoplasm. It carries out the reaction Release of an N-terminal amino acid, Xaa, from a peptide or arylamide. Xaa is preferably Glu or Asp but may be other amino acids, including Leu, Met, His, Cys and Gln.. Its function is as follows. Probably plays an important role in intracellular peptide degradation. This Yersinia pseudotuberculosis serotype O:1b (strain IP 31758) protein is Peptidase B.